A 178-amino-acid polypeptide reads, in one-letter code: Ribosome maturation factor RimM (178 aa).

The PRC barrel domain maps to 100-178 (AADEYYWYQL…VMRVEWDADF (79 aa)).

This sequence belongs to the RimM family. In terms of assembly, binds ribosomal protein uS19.

The protein localises to the cytoplasm. An accessory protein needed during the final step in the assembly of 30S ribosomal subunit, possibly for assembly of the head region. Essential for efficient processing of 16S rRNA. May be needed both before and after RbfA during the maturation of 16S rRNA. It has affinity for free ribosomal 30S subunits but not for 70S ribosomes. This chain is Ribosome maturation factor RimM, found in Pseudomonas putida (strain W619).